We begin with the raw amino-acid sequence, 206 residues long: Small ribosomal subunit protein uS4 (206 aa).

The S4 RNA-binding domain maps to 96–158; it reads GRLDNVVYRM…AKQQSRIKAA (63 aa).

This sequence belongs to the universal ribosomal protein uS4 family. As to quaternary structure, part of the 30S ribosomal subunit. Contacts protein S5. The interaction surface between S4 and S5 is involved in control of translational fidelity.

In terms of biological role, one of the primary rRNA binding proteins, it binds directly to 16S rRNA where it nucleates assembly of the body of the 30S subunit. Its function is as follows. With S5 and S12 plays an important role in translational accuracy. The polypeptide is Small ribosomal subunit protein uS4 (Aliivibrio fischeri (strain ATCC 700601 / ES114) (Vibrio fischeri)).